A 428-amino-acid polypeptide reads, in one-letter code: uncharacterized protein (428 aa).

Helical transmembrane passes span 26 to 46 (VALT…DDVF), 51 to 71 (AGID…VSVL), 90 to 110 (AAPL…SALL), 135 to 155 (TPFL…TLVG), 177 to 197 (MAPA…WLLG), 223 to 243 (LLIK…AHPV), 278 to 298 (TLLF…TGVV), 314 to 334 (LLTV…IDNI), 359 to 379 (TFWW…AVAA), and 407 to 427 (VVTA…YFVF).

It belongs to the CitM (TC 2.A.11) transporter family.

The protein resides in the cell membrane. This is an uncharacterized protein from Mycobacterium tuberculosis (strain CDC 1551 / Oshkosh).